Reading from the N-terminus, the 458-residue chain is Monomethylamine methyltransferase MtmB1 (458 aa).

Pyl202 is a non-standard amino acid (pyrrolysine).

This sequence belongs to the monomethylamine methyltransferase family.

The enzyme catalyses Co(I)-[methylamine-specific corrinoid protein] + methylamine + H(+) = methyl-Co(III)-[methylamine-specific corrinoid protein] + NH4(+). Its pathway is one-carbon metabolism; methanogenesis from methylamine. Catalyzes the transfer of the methyl group from monomethylamine to the corrinoid cofactor of MtmC. This is Monomethylamine methyltransferase MtmB1 (mtmB1) from Methanosarcina barkeri (strain Fusaro / DSM 804).